The following is a 448-amino-acid chain: T-box transcription factor T homolog 1 (448 aa).

The T-box DNA-binding region spans 54-224 (LWDKFNALTN…YNPFAKAFLD (171 aa)). Disordered regions lie at residues 290–312 (APYP…TAAS) and 401–448 (TTAS…PPSL). Residues 417–442 (STDSGYGHSTTPPAPQTRITSNNWSP) show a composition bias toward polar residues.

Its subcellular location is the nucleus. Its function is as follows. Involved in the transcriptional regulation of genes required for mesoderm formation and differentiation. This Branchiostoma floridae (Florida lancelet) protein is T-box transcription factor T homolog 1.